The following is a 395-amino-acid chain: Vomeronasal type-1 receptor 2 (395 aa).

The chain crosses the membrane as a helical span at residues 12–32; it reads LYPINISAAWHLGPLPVSCFV. The Extracellular portion of the chain corresponds to 33–51; that stretch reads SNKYQCSLAFGATTGLRVL. Residues 52-72 form a helical membrane-spanning segment; it reads VVVVPQTQLSFLSSLCLVSLF. Over 73–93 the chain is Cytoplasmic; the sequence is LHSLVSAHGEKPTKPVGLDPT. Residues 94-114 traverse the membrane as a helical segment; sequence LFQVVVGILGNFSLLYYYMFL. Topologically, residues 115-170 are extracellular; it reads YFRGYKPRSTDLILRHLTVADSLVILSKRIPETMATFGLKHFDNYFGCKFLLYAHR. The chain crosses the membrane as a helical span at residues 171–191; it reads VGRGVSIGSTCLLSVFQVITI. The Cytoplasmic segment spans residues 192–208; that stretch reads NPRNSRWAEMKVKAPTY. A helical transmembrane segment spans residues 209 to 229; the sequence is IGLSNILCWAFHMLVNAIFPI. Residues 230–267 lie on the Extracellular side of the membrane; sequence YTTGKWSNNNITKKGDLGYCSAPLSDEVTKSVYAALTS. An N-linked (GlcNAc...) asparagine glycan is attached at Asn239. The chain crosses the membrane as a helical span at residues 268–288; that stretch reads FHDVLCLGLMLWASSSIVLVL. Residues 289 to 316 lie on the Cytoplasmic side of the membrane; sequence YRHKQQVQHICRNNLYPNSSPGNRAIQS. A helical transmembrane segment spans residues 317 to 337; that stretch reads ILALVSTFALCYALSFITYVY. Topologically, residues 338 to 346 are extracellular; sequence LALFDNSSW. Asn343 is a glycosylation site (N-linked (GlcNAc...) asparagine). A helical transmembrane segment spans residues 347 to 367; sequence WLVNTAALIIACFPTISPFVL. The Cytoplasmic portion of the chain corresponds to 368–395; sequence MCRDPSRSRLCSICCRRNRRFFHDFRKM.

The protein belongs to the G-protein coupled receptor 1 family.

The protein localises to the cell membrane. Its function is as follows. Putative pheromone receptor. This is Vomeronasal type-1 receptor 2 (VN1R2) from Homo sapiens (Human).